A 510-amino-acid chain; its full sequence is Glutamyl-tRNA(Gln) amidotransferase subunit A (510 aa).

Catalysis depends on charge relay system residues K82 and S157. S181 (acyl-ester intermediate) is an active-site residue.

Belongs to the amidase family. GatA subfamily. As to quaternary structure, heterotrimer of A, B and C subunits.

The catalysed reaction is L-glutamyl-tRNA(Gln) + L-glutamine + ATP + H2O = L-glutaminyl-tRNA(Gln) + L-glutamate + ADP + phosphate + H(+). In terms of biological role, allows the formation of correctly charged Gln-tRNA(Gln) through the transamidation of misacylated Glu-tRNA(Gln) in organisms which lack glutaminyl-tRNA synthetase. The reaction takes place in the presence of glutamine and ATP through an activated gamma-phospho-Glu-tRNA(Gln). This chain is Glutamyl-tRNA(Gln) amidotransferase subunit A, found in Bordetella avium (strain 197N).